A 62-amino-acid chain; its full sequence is Large ribosomal subunit protein bL28 (62 aa).

This sequence belongs to the bacterial ribosomal protein bL28 family.

The polypeptide is Large ribosomal subunit protein bL28 (Desulforamulus reducens (strain ATCC BAA-1160 / DSM 100696 / MI-1) (Desulfotomaculum reducens)).